The chain runs to 405 residues: Secreted aspartic protease 8 (405 aa).

A signal peptide spans 1–23 (MVSIITFTKNVLVTLAFALLAQG). Residues 24 to 75 (LAIPEDIDKRAEKVVSLDFTVTRKPFNATAHGQHHQSQQQQQQQQQQPAQKR) constitute a propeptide, activation peptide. The segment at 52–78 (TAHGQHHQSQQQQQQQQQQPAQKRGTV) is disordered. Residues 58–70 (HQSQQQQQQQQQQ) are compositionally biased toward low complexity. The 304-residue stretch at 89–392 (YAATITVGSN…DLDGNTISLA (304 aa)) folds into the Peptidase A1 domain. Asp107 is a catalytic residue. 107–109 (DTG) contributes to the pepstatin A binding site. An intrachain disulfide couples Cys122 to Cys134. Residues 160-161 (ED) and 292-296 (DSGTT) contribute to the pepstatin A site. Residue Asp292 is part of the active site. Cys327 and Cys358 are disulfide-bonded.

This sequence belongs to the peptidase A1 family. Monomer.

It is found in the secreted. It carries out the reaction Preferential cleavage at the carboxyl of hydrophobic amino acids, but fails to cleave 15-Leu-|-Tyr-16, 16-Tyr-|-Leu-17 and 24-Phe-|-Phe-25 of insulin B chain. Activates trypsinogen, and degrades keratin.. In terms of biological role, secreted aspartic peptidases (SAPs) are a group of ten acidic hydrolases considered as key virulence factors. These enzymes supply the fungus with nutrient amino acids as well as are able to degrade the selected host's proteins involved in the immune defense. Moreover, acts toward human hemoglobin though limited proteolysis to generate a variety of antimicrobial hemocidins, enabling to compete with the other microorganisms of the same physiological niche using the microbicidal peptides generated from the host protein. Functionally, plays a key role in defense against host by cleaving histatin-5 (Hst 5), a peptide from human saliva that carries out fungicidal activity. The cleavage rate decreases in an order of SAP2 &gt; SAP9 &gt; SAP3 &gt; SAP7 &gt; SAP4 &gt; SAP1 &gt; SAP8. The hydrolysis of Hst 5 by SAP8 causes production of the DSHAKRHHGY, HHSHRGY and FHEKHHSHRGY peptides. In Candida albicans (strain SC5314 / ATCC MYA-2876) (Yeast), this protein is Secreted aspartic protease 8.